A 306-amino-acid chain; its full sequence is Shugoshin (306 aa).

Residues 28-75 (NFKSTNESLIKKNLQLKQQLSQCTKALEKLRNENIALREQNQELIDAT) adopt a coiled-coil conformation. Disordered regions lie at residues 122–196 (PEPS…GRRS) and 223–306 (IAPS…DTFF). Residues 133-161 (PKMECNLEKLDESPVRNFPRSDYEEENKS) are compositionally biased toward basic and acidic residues. Residues 167-181 (NGPSSSSSMTQNLEN) are compositionally biased toward polar residues. Over residues 230 to 241 (GGPPKKAPPRKA) the composition is skewed to pro residues.

The protein belongs to the shugoshin family.

The protein localises to the nucleus. The protein resides in the chromosome. It localises to the centromere. In terms of biological role, plays a central role in chromosome cohesion during cell division by preventing premature dissociation of cohesin complex from centromeres after prophase, when most of cohesin complex dissociates from chromosomes arms. In Caenorhabditis briggsae, this protein is Shugoshin (sgo-1).